An 88-amino-acid chain; its full sequence is Putative membrane protein insertion efficiency factor (88 aa).

Residues 67–88 (LNAGGYDPVPPKSDNHSKENKK) are disordered. Over residues 79–88 (SDNHSKENKK) the composition is skewed to basic and acidic residues.

It belongs to the UPF0161 family.

It is found in the cell inner membrane. Its function is as follows. Could be involved in insertion of integral membrane proteins into the membrane. The chain is Putative membrane protein insertion efficiency factor from Actinobacillus succinogenes (strain ATCC 55618 / DSM 22257 / CCUG 43843 / 130Z).